Here is a 495-residue protein sequence, read N- to C-terminus: Ectonucleoside triphosphate diphosphohydrolase 2 (495 aa).

Over 1–7 the chain is Cytoplasmic; the sequence is MAGKVRS. Residues 8-28 form a helical membrane-spanning segment; it reads LLPPLLLAAAGLAGLLLLCVP. Residues 29–462 are Extracellular-facing; it reads TRDVREPPAL…PGLRKGTDFS (434 aa). N-linked (GlcNAc...) asparagine glycosylation is present at Asn64. Residues Cys75 and Cys99 are joined by a disulfide bond. Asn129 carries N-linked (GlcNAc...) asparagine glycosylation. Glu165 serves as the catalytic Proton acceptor. Position 204-208 (204-208) interacts with ATP; sequence GASTQ. Cystine bridges form between Cys242–Cys284, Cys265–Cys310, Cys323–Cys328, and Cys377–Cys399. N-linked (GlcNAc...) asparagine glycosylation is present at Asn294. N-linked (GlcNAc...) asparagine glycosylation is found at Asn378 and Asn443. The helical transmembrane segment at 463–483 threads the bilayer; sequence SWVVLLLLFASALLAALVLLL. At 484 to 495 the chain is on the cytoplasmic side; it reads RQVHSAKLPSTI.

The protein belongs to the GDA1/CD39 NTPase family. Ca(2+) is required as a cofactor. It depends on Mg(2+) as a cofactor. As to expression, brain, placenta, skeletal muscle, kidney, pancreas, heart, ovary, testis, colon, small intestine, prostate and pancreas. No expression in adult thymus, spleen, lung, liver and peripheral blood leukocytes.

It is found in the cell membrane. The protein resides in the endoplasmic reticulum membrane. Functionally, in the nervous system, could hydrolyze ATP and other nucleotides to regulate purinergic neurotransmission. Hydrolyzes ADP only to a marginal extent. The order of activity with different substrates is ATP &gt; GTP &gt; CTP = ITP &gt; UTP &gt;&gt; ADP = UDP. This is Ectonucleoside triphosphate diphosphohydrolase 2 (ENTPD2) from Homo sapiens (Human).